Reading from the N-terminus, the 722-residue chain is MMKEVLSTGQGNTEVIHTGTLQRYQSYHIGDFCFQEIEKEIHDIEFQCQEDERNGHEAPMTKIKKLTGSTDQHDHRHAGNKPIKDQLGSSFYSHLPELHIIQIKGKIGNQFEKSTSDAPSVSTSQRISPRPQIHISNNYGNNSPNSSLLPQKQEVYMREKSFQCNESGKAFNCSSLLRKHQIPHLGDKQYKCDVCGKLFNHKQYLTCHCRCHTGEKPYKCNECGKSFSQVSSLTCHRRLHTAVKSHKCNECGKIFGQNSALVIHKAIHTGEKPYKCNECDKAFNQQSNLARHRRIHTGEKPYKCEECDKVFSRKSTLESHKRIHTGEKPYKCKVCDTAFTWNSQLARHKRIHTGEKTYKCNECGKTFSHKSSLVCHHRLHGGEKSYKCKVCDKAFAWNSHLVRHTRIHSGGKPYKCNECGKTFGQNSDLLIHKSIHTGEQPYKYEECEKVFSCGSTLETHKIIHTGEKPYKCKVCDKAFACHSYLAKHTRIHSGEKPYKCNECSKTFRLRSYLASHRRVHSGEKPYKCNECSKTFSQRSYLHCHRRLHSGEKPYKCNECGKTFSHKPSLVHHRRLHTGEKSYKCTVCDKAFVRNSYLARHTRIHTAEKPYKCNECGKAFNQQSQLSLHHRIHAGEKLYKCETCDKVFSRKSHLKRHRRIHPGKKPYKCKVCDKTFGSDSHLKQHTGLHTGEKPYKCNECGKAFSKQSTLIHHQAVHGVGKLD.

The C2H2-type 1; degenerate zinc-finger motif lies at 162–184 (FQCNESGKAFNCSSLLRKHQIPH). C2H2-type zinc fingers lie at residues 190 to 212 (YKCD…CRCH), 218 to 240 (YKCN…RRLH), 246 to 268 (HKCN…KAIH), 274 to 296 (YKCN…RRIH), 302 to 324 (YKCE…KRIH), 330 to 352 (YKCK…KRIH), 358 to 380 (YKCN…HRLH), 386 to 408 (YKCK…TRIH), and 414 to 436 (YKCN…KSIH). The C2H2-type 11; degenerate zinc finger occupies 442 to 464 (YKYEECEKVFSCGSTLETHKIIH). 9 consecutive C2H2-type zinc fingers follow at residues 470–492 (YKCK…TRIH), 498–520 (YKCN…RRVH), 526–548 (YKCN…RRLH), 554–576 (YKCN…RRLH), 582–604 (YKCT…TRIH), 610–632 (YKCN…HRIH), 638–660 (YKCE…RRIH), 666–688 (YKCK…TGLH), and 694–716 (YKCN…QAVH).

Belongs to the krueppel C2H2-type zinc-finger protein family.

The protein localises to the nucleus. May be involved in transcriptional regulation. This is Zinc finger protein 600 (ZNF600) from Homo sapiens (Human).